Here is a 343-residue protein sequence, read N- to C-terminus: Aspartate-semialdehyde dehydrogenase (343 aa).

Residues 20–23 (SGAV) and 48–49 (RS) contribute to the NADP(+) site. Position 108 (R108) interacts with phosphate. C137 functions as the Acyl-thioester intermediate in the catalytic mechanism. Q164 lines the substrate pocket. 167 to 168 (SG) lines the NADP(+) pocket. K221 is a binding site for phosphate. R243 is a substrate binding site. The active-site Proton acceptor is the H250. Position 323 (Q323) interacts with NADP(+).

It belongs to the aspartate-semialdehyde dehydrogenase family. In terms of assembly, homodimer.

It carries out the reaction L-aspartate 4-semialdehyde + phosphate + NADP(+) = 4-phospho-L-aspartate + NADPH + H(+). It functions in the pathway amino-acid biosynthesis; L-lysine biosynthesis via DAP pathway; (S)-tetrahydrodipicolinate from L-aspartate: step 2/4. Its pathway is amino-acid biosynthesis; L-methionine biosynthesis via de novo pathway; L-homoserine from L-aspartate: step 2/3. It participates in amino-acid biosynthesis; L-threonine biosynthesis; L-threonine from L-aspartate: step 2/5. Functionally, catalyzes the NADPH-dependent formation of L-aspartate-semialdehyde (L-ASA) by the reductive dephosphorylation of L-aspartyl-4-phosphate. The polypeptide is Aspartate-semialdehyde dehydrogenase (Prochlorococcus marinus (strain SARG / CCMP1375 / SS120)).